The chain runs to 138 residues: F-box protein At4g12382 (138 aa).

An F-box domain is found at 7–53 (NPSFADLPSSLIEVIMSHLALKNNIRASAACKSWYEVGVSVRVVEKH).

In Arabidopsis thaliana (Mouse-ear cress), this protein is F-box protein At4g12382.